We begin with the raw amino-acid sequence, 1288 residues long: Contactin-associated protein-like 3 (1288 aa).

The N-terminal stretch at 1–25 (MASVAWAVLKVLLLLPTQTWSPVGA) is a signal peptide. Residues 26–1245 (GNPPDCDAPL…LVNADRRDSA (1220 aa)) lie on the Extracellular side of the membrane. In terms of domain architecture, F5/8 type C spans 31 to 177 (CDAPLASALP…IGMRIEVYGC (147 aa)). An intrachain disulfide couples Cys31 to Cys177. 2 consecutive Laminin G-like domains span residues 183-364 (VVYF…SFSC) and 370-545 (VPVT…IDSC). 4 N-linked (GlcNAc...) asparagine glycosylation sites follow: Asn285, Asn359, Asn441, and Asn497. The cysteines at positions 332 and 364 are disulfide-linked. Disulfide bonds link Cys513-Cys545, Cys551-Cys562, Cys556-Cys571, and Cys573-Cys583. The EGF-like 1 domain maps to 551–583 (CLPSYCEHGGECSQSWDTFSCDCLGTGYTGETC). Residues 584 to 792 (HSSLYEQSCE…LLCRGDQSFW (209 aa)) enclose the Fibrinogen C-terminal domain. Asn623 and Asn706 each carry an N-linked (GlcNAc...) asparagine glycan. The region spanning 793-958 (NSASFNTETS…TVTPGVEPGC (166 aa)) is the Laminin G-like 3 domain. 4 cysteine pairs are disulfide-bonded: Cys931-Cys958, Cys962-Cys975, Cys969-Cys984, and Cys986-Cys996. Residues 962-996 (CSTYGHLCRNGGRCREKRRGVTCDCAFSAYDGPFC) form the EGF-like 2 domain. The 189-residue stretch at 1015-1203 (QEHYTLSENS…RGHVAPMARC (189 aa)) folds into the Laminin G-like 4 domain. Residues Asn1023, Asn1073, and Asn1120 are each glycosylated (N-linked (GlcNAc...) asparagine). An intrachain disulfide couples Cys1167 to Cys1203. Positions 1215 to 1236 (ELAPRLAGGAGRSGPADEGEPL) are disordered. A helical membrane pass occupies residues 1246–1266 (VIGGVIAVVIFILLCITAIAI). At 1267 to 1288 (RIYQQRKLRKENESKVSKKEEC) the chain is on the cytoplasmic side.

This sequence belongs to the neurexin family.

It localises to the cell membrane. The protein resides in the secreted. In Homo sapiens (Human), this protein is Contactin-associated protein-like 3 (CNTNAP3).